Reading from the N-terminus, the 501-residue chain is MLO-like protein 5 (501 aa).

The Extracellular segment spans residues 1–22 (MAGGGGGSTSGEGPRELDQTPT). Residues 23 to 43 (WAVSTVCGVIILISIVLELMI) form a helical membrane-spanning segment. Topologically, residues 44-68 (HKIGEVFTERRKKALYEALQKIKNE) are cytoplasmic. A helical transmembrane segment spans residues 69-89 (LMVLGFISLLLTFGQNYIASL). At 90–151 (CVASRYGHAM…ISLNALHQVH (62 aa)) the chain is on the extracellular side. A helical membrane pass occupies residues 152-172 (IFIFFLAVFHVIYSAITMMLG). Residues 173–273 (RAKIRGWKVW…IKRSLEDDFK (101 aa)) are Cytoplasmic-facing. Residues 274-294 (VVVGISPELWAFVMLFLLFDV) form a helical membrane-spanning segment. A topological domain (extracellular) is located at residue His295. A helical transmembrane segment spans residues 296–316 (GWYVTAVITMIPPLLTLAIGT). Topologically, residues 317 to 359 (KLQAIISDMALEIQERHAVIQGMPLVNVSDRHFWFSRPALVLH) are cytoplasmic. A helical transmembrane segment spans residues 360-380 (IIHFILFQNAFEITYFFWIWY). The Extracellular portion of the chain corresponds to 381 to 391 (EFGLRSCFHHH). A helical membrane pass occupies residues 392-412 (FALIIIRVALGVGVQFLCSYI). Residues 413–501 (TLPLYALVTQ…SQSRDLLSGP (89 aa)) lie on the Cytoplasmic side of the membrane. A disordered region spans residues 443 to 501 (WHKNAKKKSETPGQTQPPLPNLRPKTGGDIESASPANITASVDVKESDQSQSRDLLSGP). The calmodulin-binding stretch occupies residues 450-471 (KSETPGQTQPPLPNLRPKTGGD). The span at 491–501 (QSQSRDLLSGP) shows a compositional bias: polar residues.

This sequence belongs to the MLO family.

The protein resides in the membrane. Its function is as follows. May be involved in modulation of pathogen defense and leaf cell death. Activity seems to be regulated by Ca(2+)-dependent calmodulin binding and seems not to require heterotrimeric G proteins. This is MLO-like protein 5 (MLO5) from Arabidopsis thaliana (Mouse-ear cress).